We begin with the raw amino-acid sequence, 261 residues long: MADGYWNRQQSLLPHSGLHKRPRPDYEMPASGLPSGNEMHYLSREEDRSGHPMVKDSKTIGSAYDRYLQGQVPSFTSGEASTVGALGLQRGIGGLPNHSLSDPSAMIGRHGGGGPDLAPNGRGMNYGFQPPMDPVSRHGPEPALLPPDASPTLYIEGLPSDCTRREVAHIFRPFVGYREVRLVSKEAKHRGDPLILCFVDFANPACAATALSALQGYKVDEINPESSHLRLQFSRYPGPRSGGGPRSSGPPRGGHGSRGRR.

Disordered stretches follow at residues 1–38 (MADG…SGNE) and 232–261 (QFSR…RGRR). Residues 151-236 (PTLYIEGLPS…SHLRLQFSRY (86 aa)) form the RRM domain. Positions 240–254 (RSGGGPRSSGPPRGG) are enriched in gly residues.

In terms of tissue distribution, ubiquitous.

The protein localises to the nucleus speckle. Its subcellular location is the cytoplasmic granule. Functionally, RNA-binding protein interacting with the enod40 RNA. In Medicago truncatula (Barrel medic), this protein is RNA-binding protein 1.